A 321-amino-acid polypeptide reads, in one-letter code: MATSNATDDLFASYDAEYWNTYLDARPTYSSDFYSIIFEHHAQKGSDSWALAHDVGTGPGNVAAVLAQRFEQVIATDASPDTVNAAQKRQQQTNKIRFAECKGENLALAGLSPPRTADLVANAEAIPLMDAEEAIGCFAELLAPGGTCAVWFYGRPKFAGPDTAVNEACQRIFYRISTRLLNKIGGVSGPLWERSTRTIASQLDNVAFPTAQWRDVVRYKWNCEQTTMLFHDESQFGGPVERVNCVGPAEEVVSKTDPGFWQMQWGAAEVRRWFEAHLPTWFEDKAEDLELEGWYEELDRVLGGKSLPVTWPVVLLLATRV.

The protein belongs to the methyltransferase superfamily.

The protein operates within secondary metabolite biosynthesis; flavonoid biosynthesis. Methyltransferase; part of the gene cluster that mediates the biosynthesis of chlorflavonin, a fungal flavonoid with acetolactate synthase inhibitory activity. Within the pathway, cfoB is responsible for the methylation at position C7-OH of flavonoid. The pathway begins with the PKS-NRPS hybrid synthetase cfoA that uses benzoic acid or p-hydroxybenzoic acid as a starter unit with four rounds of chain elongation using malonyl-CoA to form the chalcone skeleton. Then, a new type of chalcone isomerase, cfoK, catalyzes the conversion of the chalcone into a flavanone by a histidine-mediated oxa-Michael addition mechanism. The desaturation of flavanone to flavone is catalyzed by a new type of flavone synthase, the flavin mononucleotide (FMN)-dependent oxidoreductase cfoJ. Monooxygenases cfoF, cfoG, and P450 cfoH are responsible for the hydroxylation of the flavonoid skeleton at sites C3, C8, and C2', respectively. Like cfoF, the dehydratase cfoI also plays a role in the hydroxylation of position C3. Methyltransferases cfoB, cfoC, and cfoD then catalyze the methylation of C7-OH, C8-OH, and C3-OH, respectively. Finally, the monooxygenase cfoE is responsible for the chlorination of flavonoid at position C3'. The protein is Methyltransferase cfoB of Aspergillus candidus.